Here is a 321-residue protein sequence, read N- to C-terminus: GTP 3',8-cyclase (321 aa).

The region spanning 5 to 233 (SFNRVIDYIR…QGSSKIYTLE (229 aa)) is the Radical SAM core domain. Arg14 contributes to the GTP binding site. [4Fe-4S] cluster-binding residues include Cys21 and Cys25. Residue Tyr27 participates in S-adenosyl-L-methionine binding. Residue Cys28 participates in [4Fe-4S] cluster binding. Position 64 (Arg64) interacts with GTP. S-adenosyl-L-methionine is bound at residue Gly68. Ser95 provides a ligand contact to GTP. S-adenosyl-L-methionine is bound at residue Ser119. GTP is bound at residue Lys155. Residue Met189 coordinates S-adenosyl-L-methionine. [4Fe-4S] cluster-binding residues include Cys249 and Cys252. GTP is bound at residue 254–256 (RIR). Residue Cys266 participates in [4Fe-4S] cluster binding.

This sequence belongs to the radical SAM superfamily. MoaA family. As to quaternary structure, monomer and homodimer. It depends on [4Fe-4S] cluster as a cofactor.

It catalyses the reaction GTP + AH2 + S-adenosyl-L-methionine = (8S)-3',8-cyclo-7,8-dihydroguanosine 5'-triphosphate + 5'-deoxyadenosine + L-methionine + A + H(+). It participates in cofactor biosynthesis; molybdopterin biosynthesis. Its function is as follows. Catalyzes the cyclization of GTP to (8S)-3',8-cyclo-7,8-dihydroguanosine 5'-triphosphate. In Helicobacter pylori (strain HPAG1), this protein is GTP 3',8-cyclase.